Reading from the N-terminus, the 127-residue chain is Glycine cleavage system H protein (127 aa).

The Lipoyl-binding domain occupies 24 to 105 (TLTIGITDLA…AYDAWLFKIK (82 aa)). Lys-65 is subject to N6-lipoyllysine.

This sequence belongs to the GcvH family. As to quaternary structure, the glycine cleavage system is composed of four proteins: P, T, L and H. Requires (R)-lipoate as cofactor.

The glycine cleavage system catalyzes the degradation of glycine. The H protein shuttles the methylamine group of glycine from the P protein to the T protein. The sequence is that of Glycine cleavage system H protein from Ralstonia nicotianae (strain ATCC BAA-1114 / GMI1000) (Ralstonia solanacearum).